Consider the following 617-residue polypeptide: Procollagen galactosyltransferase 1 (617 aa).

The first 31 residues, 1–31 (MAALPRGSRGLPLLPLLLLLPPLGGPRGADG), serve as a signal peptide directing secretion. N-linked (GlcNAc...) asparagine glycosylation is found at N91, N179, and N376. Basic and acidic residues predominate over residues 582-601 (DRAKSQKMREQQALSREAKN). A disordered region spans residues 582–617 (DRAKSQKMREQQALSREAKNSDVLQSPLDSTARDEL). Positions 614–617 (RDEL) match the Prevents secretion from ER motif.

This sequence belongs to the glycosyltransferase 25 family. In terms of processing, N-glycosylated.

It is found in the endoplasmic reticulum lumen. The enzyme catalyses (5R)-5-hydroxy-L-lysyl-[collagen] + UDP-alpha-D-galactose = (5R)-5-O-(beta-D-galactosyl)-5-hydroxy-L-lysyl-[collagen] + UDP + H(+). In terms of biological role, beta-galactosyltransferase that transfers beta-galactose to hydroxylysine residues of type I collagen. By acting on collagen glycosylation, facilitates the formation of collagen triple helix. Also involved in the biosynthesis of collagen type IV. In Mus musculus (Mouse), this protein is Procollagen galactosyltransferase 1 (Colgalt1).